A 347-amino-acid polypeptide reads, in one-letter code: MGLKIHRPRRGSMAYYPRKRASDIVPRIRNWPVIDLGKPTLLGFVGYKAGMVHVTVVDDRKTSPFFGKELVKAVTVVETPPLYVVGLRAYAINPLKAELVSVGEAWVNIPNEVRKYIARRIPTLPEKFDTDKALADLQGLLDSVSYIKVIAMTQPYKAGVGKKTPEVLEIPVGGVPTIDEQFKYASGLLGKEVKPTDVFKPGQLVDVIGVTKGKGTQGVIKRFGVKELPRWHKHRKGSRRTGTVGPKPAVMYTQPRMGQMGFHRRTEYNKRILKISDNGSEITPKGGFKHYGIVRSGYMLIEGSTPGVVKRLIAFRYPIRPPFNYDLKQVQAPSVTWVSVMGVSGVS.

It belongs to the universal ribosomal protein uL3 family. In terms of assembly, part of the 50S ribosomal subunit. Forms a cluster with proteins L14 and L24e.

Its function is as follows. One of the primary rRNA binding proteins, it binds directly near the 3'-end of the 23S rRNA, where it nucleates assembly of the 50S subunit. The polypeptide is Large ribosomal subunit protein uL3 (Caldivirga maquilingensis (strain ATCC 700844 / DSM 13496 / JCM 10307 / IC-167)).